We begin with the raw amino-acid sequence, 163 residues long: Urease accessory protein UreE (163 aa).

The segment at 134-163 is disordered; the sequence is EAGAYGGGHRHHHDDDAPSIRQPARLRIHE.

The protein belongs to the UreE family.

The protein localises to the cytoplasm. Its function is as follows. Involved in urease metallocenter assembly. Binds nickel. Probably functions as a nickel donor during metallocenter assembly. The protein is Urease accessory protein UreE of Methylobacillus flagellatus (strain ATCC 51484 / DSM 6875 / VKM B-1610 / KT).